A 109-amino-acid polypeptide reads, in one-letter code: Ferredoxin (109 aa).

2 4Fe-4S ferredoxin-type domains span residues 2-30 (TYVV…YEGE) and 31-60 (FMLV…PESP). The [3Fe-4S] cluster site is built by Cys-9 and Cys-17. Residues Cys-21, Cys-40, Cys-43, and Cys-46 each contribute to the [4Fe-4S] cluster site. Residue Cys-50 coordinates [3Fe-4S] cluster.

Requires [4Fe-4S] cluster as cofactor. [3Fe-4S] cluster serves as cofactor.

Its function is as follows. Ferredoxins are iron-sulfur proteins that transfer electrons in a wide variety of metabolic reactions. The chain is Ferredoxin (fdxA) from Rickettsia felis (strain ATCC VR-1525 / URRWXCal2) (Rickettsia azadi).